We begin with the raw amino-acid sequence, 185 residues long: Photosystem I assembly protein Ycf4 (185 aa).

2 helical membrane passes run asparagine 21 to tyrosine 43 and glycine 63 to leucine 85.

The protein belongs to the Ycf4 family.

It localises to the plastid. The protein localises to the chloroplast thylakoid membrane. Seems to be required for the assembly of the photosystem I complex. This is Photosystem I assembly protein Ycf4 from Aegilops crassa (Persian goatgrass).